We begin with the raw amino-acid sequence, 245 residues long: tRNA pseudouridine synthase A (245 aa).

D52 acts as the Nucleophile in catalysis. Y111 is a binding site for substrate.

The protein belongs to the tRNA pseudouridine synthase TruA family. As to quaternary structure, homodimer.

The enzyme catalyses uridine(38/39/40) in tRNA = pseudouridine(38/39/40) in tRNA. Its function is as follows. Formation of pseudouridine at positions 38, 39 and 40 in the anticodon stem and loop of transfer RNAs. The chain is tRNA pseudouridine synthase A from Thermotoga petrophila (strain ATCC BAA-488 / DSM 13995 / JCM 10881 / RKU-1).